A 593-amino-acid polypeptide reads, in one-letter code: UvrABC system protein C (593 aa).

Residues methionine 17–isoleucine 94 form the GIY-YIG domain. Residues lysine 199 to leucine 234 form the UVR domain.

Belongs to the UvrC family. As to quaternary structure, interacts with UvrB in an incision complex.

It localises to the cytoplasm. Functionally, the UvrABC repair system catalyzes the recognition and processing of DNA lesions. UvrC both incises the 5' and 3' sides of the lesion. The N-terminal half is responsible for the 3' incision and the C-terminal half is responsible for the 5' incision. This chain is UvrABC system protein C, found in Staphylococcus aureus (strain bovine RF122 / ET3-1).